The chain runs to 863 residues: DNA mismatch repair protein MutS (863 aa).

607-614 (GPNMAGKS) is an ATP binding site.

The protein belongs to the DNA mismatch repair MutS family.

In terms of biological role, this protein is involved in the repair of mismatches in DNA. It is possible that it carries out the mismatch recognition step. This protein has a weak ATPase activity. This chain is DNA mismatch repair protein MutS, found in Caldicellulosiruptor saccharolyticus (strain ATCC 43494 / DSM 8903 / Tp8T 6331).